The primary structure comprises 347 residues: Transcription factor JunB (347 aa).

Residues Lys-4, Lys-33, and Lys-36 each participate in a glycyl lysine isopeptide (Lys-Gly) (interchain with G-Cter in SUMO2) cross-link. A disordered region spans residues 50–77 (LKAPGARGPGPEGNGGGSYFSSQGSDTG). Over residues 56-67 (RGPGPEGNGGGS) the composition is skewed to gly residues. Over residues 68–77 (YFSSQGSDTG) the composition is skewed to polar residues. A Glycyl lysine isopeptide (Lys-Gly) (interchain with G-Cter in SUMO2) cross-link involves residue Lys-81. Phosphothreonine occurs at positions 102 and 104. Ser-117 carries the phosphoserine modification. A Glycyl lysine isopeptide (Lys-Gly) (interchain with G-Cter in SUMO2) cross-link involves residue Lys-141. An N6-acetyllysine; alternate modification is found at Lys-240. Lys-240 is covalently cross-linked (Glycyl lysine isopeptide (Lys-Gly) (interchain with G-Cter in SUMO1); alternate). Residue Lys-240 forms a Glycyl lysine isopeptide (Lys-Gly) (interchain with G-Cter in SUMO2); alternate linkage. Residues 241-253 (EEPQTVPEARSRD) are compositionally biased toward basic and acidic residues. The interval 241–260 (EEPQTVPEARSRDATPPVSP) is disordered. The residue at position 251 (Ser-251) is a Phosphoserine. Phosphothreonine is present on Thr-255. Ser-259 carries the phosphoserine modification. The basic motif stretch occupies residues 268 to 295 (RIKVERKRLRNRLAATKCRKRKLERIAR). A bZIP domain is found at 268–331 (RIKVERKRLR…AQLKQKVMTH (64 aa)). The leucine-zipper stretch occupies residues 296–324 (LEDKVKTLKAENAGLSSTAGLLREQVAQL). Residue Lys-343 forms a Glycyl lysine isopeptide (Lys-Gly) (interchain with G-Cter in SUMO2) linkage.

The protein belongs to the bZIP family. Jun subfamily. In terms of assembly, binds DNA as a homodimer or as a heterodimer with another member of the Jun/Fos family. Component of an AP-1 transcription factor complex composed of JUN-FOS heterodimers. As part of the AP-1 transcription factor complex, forms heterodimers with FOSB, thereby binding to the AP-1 consensus sequence and stimulating transcription. Interacts with ITCH (via its WW domains). In terms of processing, ubiquitinated by ITCH, leading to its degradation.

It localises to the nucleus. Its function is as follows. Transcription factor involved in regulating gene activity following the primary growth factor response. Binds to the DNA sequence 5'-TGA[GC]TCA-3'. Heterodimerizes with proteins of the FOS family to form an AP-1 transcription complex, thereby enhancing its DNA binding activity to an AP-1 consensus sequence and its transcriptional activity. This Bos taurus (Bovine) protein is Transcription factor JunB (JUNB).